We begin with the raw amino-acid sequence, 289 residues long: 4-diphosphocytidyl-2-C-methyl-D-erythritol kinase (289 aa).

Residue Lys-16 is part of the active site. An ATP-binding site is contributed by 99–109 (PMGGGIGGGSS). Residue Asp-141 is part of the active site.

The protein belongs to the GHMP kinase family. IspE subfamily.

The catalysed reaction is 4-CDP-2-C-methyl-D-erythritol + ATP = 4-CDP-2-C-methyl-D-erythritol 2-phosphate + ADP + H(+). It participates in isoprenoid biosynthesis; isopentenyl diphosphate biosynthesis via DXP pathway; isopentenyl diphosphate from 1-deoxy-D-xylulose 5-phosphate: step 3/6. Catalyzes the phosphorylation of the position 2 hydroxy group of 4-diphosphocytidyl-2C-methyl-D-erythritol. The polypeptide is 4-diphosphocytidyl-2-C-methyl-D-erythritol kinase (Ralstonia nicotianae (strain ATCC BAA-1114 / GMI1000) (Ralstonia solanacearum)).